The following is a 299-amino-acid chain: MSTGIETAGVPDAVIPELVIISGMSGAGRSTAAKCLEDLGWFVVDNLPPALIPTMVELGARSQGNVARIAVVVDVRGRRFFDNLRESLADLESKNVTRRIVFLESSDEALVRRFESVRRPHPLQGDGRIVDGIDAERELLRELRGDADLVIDTSSLNVHELRAKMDAQFAGDEEPELRATVMSFGFKYGLPVDADLVVDMRFLPNPHWVPELRPFTGLNEEVSAYVFNQPGAKEFLDRYAELLRLIAAGYRREGKRYVTIAVGCTGGKHRSVATSEKLAARLAAEGVETVVVHRDMGRE.

23–30 (GMSGAGRS) lines the ATP pocket. 74 to 77 (DVRG) serves as a coordination point for GTP.

The protein belongs to the RapZ-like family.

Displays ATPase and GTPase activities. The protein is Nucleotide-binding protein SAV_6292 of Streptomyces avermitilis (strain ATCC 31267 / DSM 46492 / JCM 5070 / NBRC 14893 / NCIMB 12804 / NRRL 8165 / MA-4680).